Consider the following 219-residue polypeptide: MTAPGHGLESLERRGLMFVLSSPSGAGKTTLSRLLIERVAGLKMSVSATTRTKRPGEEDGRDYYFVDHARFQAMTENAELLEWANVFDNCYGTPRAPVEAALAVGQDVLFDIDWQGTQQLREKARDDVVSVFILPPSAADLEKRLHTRAQDSDEVIRGRMSRASHELSHFAEYDYIVVNHDIDEAFAEVHSILKAERLKRERRTGLTAFVRDLQKQLER.

The region spanning 15-194 is the Guanylate kinase-like domain; sequence GLMFVLSSPS…AFAEVHSILK (180 aa). 22 to 29 lines the ATP pocket; that stretch reads SPSGAGKT.

The protein belongs to the guanylate kinase family.

Its subcellular location is the cytoplasm. The catalysed reaction is GMP + ATP = GDP + ADP. Its function is as follows. Essential for recycling GMP and indirectly, cGMP. The protein is Guanylate kinase of Rhodopseudomonas palustris (strain BisB18).